A 575-amino-acid chain; its full sequence is Cytoskeleton-associated protein 4 (575 aa).

Positions 1 to 73 (MPSAKQRGSK…RGRSSAATAN (73 aa)) are disordered. Residues 1-85 (MPSAKQRGSK…SASCSRRLGR (85 aa)) are Cytoplasmic-facing. 3 positions are modified to phosphoserine: serine 3, serine 17, and serine 19. Residue lysine 21 is modified to N6-acetyllysine. Pro residues predominate over residues 37 to 53 (PAAPQQPQPPAPHPPQH). Cysteine 79 carries the S-palmitoyl cysteine; by ZDHHC2 lipid modification. The chain crosses the membrane as a helical span at residues 86–108 (VLNFLFYLSLVAAAAFSGWYVHH). Topologically, residues 109-575 (VLEEVQQVRR…LKVEKIHEKI (467 aa)) are extracellular. Residues 125-193 (RQRDELGQGL…QKLQNEILKD (69 aa)) are a coiled coil. Residues serine 211, serine 292, and serine 367 each carry the phosphoserine modification. 2 coiled-coil regions span residues 236-438 (DVQK…VGNL) and 507-575 (SSLD…HEKI).

In terms of assembly, interacts with REEP5. Reversibly palmitoylated. Palmitoylation at Cys-79 by DHHC2 is required for its trafficking from the ER to the plasma membrane and for its perinuclear localization. In terms of processing, increased phosphorylation during mitosis prevents binding to microtubules. Expressed in cardiomyocytes (at protein level).

It is found in the endoplasmic reticulum membrane. The protein localises to the cell membrane. Its subcellular location is the cytoplasm. The protein resides in the cytoskeleton. It localises to the perinuclear region. Its function is as follows. High-affinity epithelial cell surface receptor for APF. Functionally, mediates the anchoring of the endoplasmic reticulum to microtubules. This is Cytoskeleton-associated protein 4 (Ckap4) from Mus musculus (Mouse).